The following is a 187-amino-acid chain: UPF0301 protein VSAL_I0547 (187 aa).

The protein belongs to the UPF0301 (AlgH) family.

The chain is UPF0301 protein VSAL_I0547 from Aliivibrio salmonicida (strain LFI1238) (Vibrio salmonicida (strain LFI1238)).